Reading from the N-terminus, the 299-residue chain is ATP phosphoribosyltransferase (299 aa).

Belongs to the ATP phosphoribosyltransferase family. Long subfamily. It depends on Mg(2+) as a cofactor.

The protein localises to the cytoplasm. It catalyses the reaction 1-(5-phospho-beta-D-ribosyl)-ATP + diphosphate = 5-phospho-alpha-D-ribose 1-diphosphate + ATP. Its pathway is amino-acid biosynthesis; L-histidine biosynthesis; L-histidine from 5-phospho-alpha-D-ribose 1-diphosphate: step 1/9. Feedback inhibited by histidine. Its function is as follows. Catalyzes the condensation of ATP and 5-phosphoribose 1-diphosphate to form N'-(5'-phosphoribosyl)-ATP (PR-ATP). Has a crucial role in the pathway because the rate of histidine biosynthesis seems to be controlled primarily by regulation of HisG enzymatic activity. This Campylobacter lari (strain RM2100 / D67 / ATCC BAA-1060) protein is ATP phosphoribosyltransferase.